Here is a 355-residue protein sequence, read N- to C-terminus: Guanine nucleotide-binding protein subunit alpha-14 (355 aa).

Positions 34 to 355 (RELKLLLLGT…QLNLREFNLV (322 aa)) constitute a G-alpha domain. The segment at 37–50 (KLLLLGTGESGKST) is G1 motif. GTP contacts are provided by residues 42-49 (GTGESGKS), 176-182 (LRVRVPT), 201-205 (DVGGQ), 270-273 (NKKD), and Ala-327. Mg(2+)-binding residues include Ser-49 and Thr-182. A G2 motif region spans residues 174-182 (DVLRVRVPT). Residues 197–206 (FRMVDVGGQR) form a G3 motif region. The segment at 266-273 (ILFLNKKD) is G4 motif. A G5 motif region spans residues 325–330 (TCATDT).

The protein belongs to the G-alpha family. G(q) subfamily. As to quaternary structure, g proteins are composed of 3 units; alpha, beta and gamma. The alpha chain contains the guanine nucleotide binding site.

Functionally, guanine nucleotide-binding proteins (G proteins) are involved as modulators or transducers in various transmembrane signaling systems. This Bos taurus (Bovine) protein is Guanine nucleotide-binding protein subunit alpha-14 (GNA14).